The following is a 158-amino-acid chain: Ribonuclease H (158 aa).

The 142-residue stretch at 3-144 (ELKLIHIFTD…CDQLARAAAE (142 aa)) folds into the RNase H type-1 domain. Asp12, Glu50, Asp72, and Asp136 together coordinate Mg(2+).

It belongs to the RNase H family. Monomer. Requires Mg(2+) as cofactor.

It localises to the cytoplasm. The enzyme catalyses Endonucleolytic cleavage to 5'-phosphomonoester.. Endonuclease that specifically degrades the RNA of RNA-DNA hybrids. This is Ribonuclease H from Shewanella sp. (strain MR-7).